Reading from the N-terminus, the 284-residue chain is L-ribulose-5-phosphate 3-epimerase UlaE (284 aa).

Belongs to the L-ribulose-5-phosphate 3-epimerase family.

It catalyses the reaction L-ribulose 5-phosphate = L-xylulose 5-phosphate. It participates in cofactor degradation; L-ascorbate degradation; D-xylulose 5-phosphate from L-ascorbate: step 3/4. In terms of biological role, catalyzes the isomerization of L-xylulose-5-phosphate to L-ribulose-5-phosphate. Is involved in the anaerobic L-ascorbate utilization. This is L-ribulose-5-phosphate 3-epimerase UlaE from Shigella boydii serotype 18 (strain CDC 3083-94 / BS512).